Reading from the N-terminus, the 195-residue chain is Nicotinamide riboside kinase 2 (195 aa).

Residue 9 to 17 participates in ATP binding; the sequence is GVTNGGKTT. T16 and D35 together coordinate Mg(2+). The active-site Proton acceptor is the D35. Residues 35–38 and 54–55 contribute to the substrate site; these read DDFF and WD. R130 contacts ATP. Substrate contacts are provided by residues R131 and 136-137; that span reads YM. ATP is bound by residues 134–136 and 174–176; these read RTY and KSP.

It belongs to the uridine kinase family. NRK subfamily. Monomer. Interacts with ITGB1 alone or when associated with alpha-7, but not with alpha-5. As to expression, expressed in skeletal muscle (at protein level).

It catalyses the reaction beta-nicotinamide D-riboside + ATP = beta-nicotinamide D-ribonucleotide + ADP + H(+). The catalysed reaction is beta-D-ribosylnicotinate + ATP = nicotinate beta-D-ribonucleotide + ADP + H(+). It participates in cofactor biosynthesis; NAD(+) biosynthesis. Functionally, catalyzes the phosphorylation of nicotinamide riboside (NR) and nicotinic acid riboside (NaR) to form nicotinamide mononucleotide (NMN) and nicotinic acid mononucleotide (NaMN). Reduces laminin matrix deposition and cell adhesion to laminin, but not to fibronectin. Involved in the regulation of PXN at the protein level and of PXN tyrosine phosphorylation. May play a role in the regulation of terminal myogenesis. This is Nicotinamide riboside kinase 2 (Nmrk2) from Mus musculus (Mouse).